The following is a 126-amino-acid chain: Phosphoribosyl-AMP cyclohydrolase (126 aa).

Residue aspartate 77 coordinates Mg(2+). A Zn(2+)-binding site is contributed by cysteine 78. Mg(2+) contacts are provided by aspartate 79 and aspartate 81. 2 residues coordinate Zn(2+): cysteine 95 and cysteine 102.

Belongs to the PRA-CH family. In terms of assembly, homodimer. Requires Mg(2+) as cofactor. Zn(2+) is required as a cofactor.

It is found in the cytoplasm. It carries out the reaction 1-(5-phospho-beta-D-ribosyl)-5'-AMP + H2O = 1-(5-phospho-beta-D-ribosyl)-5-[(5-phospho-beta-D-ribosylamino)methylideneamino]imidazole-4-carboxamide. Its pathway is amino-acid biosynthesis; L-histidine biosynthesis; L-histidine from 5-phospho-alpha-D-ribose 1-diphosphate: step 3/9. Its function is as follows. Catalyzes the hydrolysis of the adenine ring of phosphoribosyl-AMP. The chain is Phosphoribosyl-AMP cyclohydrolase from Cellvibrio japonicus (strain Ueda107) (Pseudomonas fluorescens subsp. cellulosa).